The primary structure comprises 177 residues: Nucleoside triphosphate/diphosphate phosphatase (177 aa).

Arg-23 functions as the Proton donor in the catalytic mechanism. Mg(2+) contacts are provided by Asn-87, Asp-103, Asp-105, Asp-107, Asp-120, and Glu-123.

Belongs to the Ntdp family. Mg(2+) serves as cofactor.

It carries out the reaction a ribonucleoside 5'-triphosphate + H2O = a ribonucleoside 5'-diphosphate + phosphate + H(+). The catalysed reaction is a ribonucleoside 5'-diphosphate + H2O = a ribonucleoside 5'-phosphate + phosphate + H(+). Functionally, has nucleoside phosphatase activity towards nucleoside triphosphates and nucleoside diphosphates. The protein is Nucleoside triphosphate/diphosphate phosphatase of Streptococcus uberis (strain ATCC BAA-854 / 0140J).